Reading from the N-terminus, the 533-residue chain is Probable bifunctional tRNA threonylcarbamoyladenosine biosynthesis protein (533 aa).

The segment at M1 to W328 is kae1. Fe cation contacts are provided by H112 and H116. L-threonylcarbamoyladenylate-binding positions include N133–A137, D165, G178, E182, and N261. D289 lines the Fe cation pocket. Residues P339–H533 form the Protein kinase domain. ATP contacts are provided by residues V347–V354 and K363. D452 functions as the Proton acceptor; for kinase activity in the catalytic mechanism.

This sequence in the N-terminal section; belongs to the KAE1 / TsaD family. It in the C-terminal section; belongs to the protein kinase superfamily. Tyr protein kinase family. BUD32 subfamily. Component of the KEOPS complex that consists of Kae1, Bud32, Cgi121 and Pcc1; the whole complex dimerizes. The cofactor is Fe(2+).

The protein resides in the cytoplasm. It catalyses the reaction L-seryl-[protein] + ATP = O-phospho-L-seryl-[protein] + ADP + H(+). The catalysed reaction is L-threonyl-[protein] + ATP = O-phospho-L-threonyl-[protein] + ADP + H(+). It carries out the reaction L-threonylcarbamoyladenylate + adenosine(37) in tRNA = N(6)-L-threonylcarbamoyladenosine(37) in tRNA + AMP + H(+). Required for the formation of a threonylcarbamoyl group on adenosine at position 37 (t(6)A37) in tRNAs that read codons beginning with adenine. Is a component of the KEOPS complex that is probably involved in the transfer of the threonylcarbamoyl moiety of threonylcarbamoyl-AMP (TC-AMP) to the N6 group of A37. The Kae1 domain likely plays a direct catalytic role in this reaction. The Bud32 domain probably displays kinase activity that regulates Kae1 function. The sequence is that of Probable bifunctional tRNA threonylcarbamoyladenosine biosynthesis protein from Haloquadratum walsbyi (strain DSM 16790 / HBSQ001).